Here is a 196-residue protein sequence, read N- to C-terminus: DnaA initiator-associating protein DiaA (196 aa).

The SIS domain maps to 34-196; sequence MVQSLLNGNK…DNTLFPHQND (163 aa).

The protein belongs to the SIS family. DiaA subfamily. In terms of assembly, homotetramer; dimer of dimers.

Required for the timely initiation of chromosomal replication via direct interactions with the DnaA initiator protein. The chain is DnaA initiator-associating protein DiaA from Pectobacterium carotovorum subsp. carotovorum (strain PC1).